A 68-amino-acid polypeptide reads, in one-letter code: Large ribosomal subunit protein uL29 (68 aa).

The protein belongs to the universal ribosomal protein uL29 family.

This is Large ribosomal subunit protein uL29 from Streptococcus thermophilus (strain ATCC BAA-250 / LMG 18311).